The primary structure comprises 331 residues: Spondin-2 (331 aa).

The first 26 residues, 1–26 (MENPSPAAALGKALCALLLATLGAAG), serve as a signal peptide directing secretion. In terms of domain architecture, Spondin spans 31-221 (GESICSARAL…EITSSSPSHP (191 aa)). Cysteines 35 and 171 form a disulfide. Residue E141 participates in a divalent metal cation binding. Ca(2+)-binding residues include D160, D188, and D192. Positions 277 to 331 (DCEVSLWSSWGLCGGHCGRLGTKSRTRYVRVQPANNGSPCPELEEEAECVPDNCV) constitute a TSP type-1 domain. Residue W283 is glycosylated (C-linked (Man) tryptophan).

In terms of assembly, monomer. Interacts with integrin. In terms of tissue distribution, expressed in normal lung tissue but not in lung carcinoma cell lines.

It is found in the secreted. It localises to the extracellular space. The protein localises to the extracellular matrix. Functionally, cell adhesion protein that promotes adhesion and outgrowth of hippocampal embryonic neurons. Binds directly to bacteria and their components and functions as an opsonin for macrophage phagocytosis of bacteria. Essential in the initiation of the innate immune response and represents a unique pattern-recognition molecule in the ECM for microbial pathogens. Binds bacterial lipopolysaccharide (LPS). The sequence is that of Spondin-2 (SPON2) from Homo sapiens (Human).